The following is a 299-amino-acid chain: Tetrahydromethanopterin S-methyltransferase subunit E (299 aa).

Transmembrane regions (helical) follow at residues 57 to 77, 80 to 100, 133 to 153, 158 to 178, 237 to 257, and 261 to 281; these read AISGEPVSYGLYVAVAGSVAW, INAGLNAVLALIIGSGVAAIV, IGPIVGHGFIAVFTMVLAAYL, LGNPFPLPLVALIFGITVGAI, GLCFGLIIFLDGWRSIVGNII, and LVTKTSIALVVGLLVVVAAMI.

It belongs to the MtrE family. In terms of assembly, the complex is composed of 8 subunits; MtrA, MtrB, MtrC, MtrD, MtrE, MtrF, MtrG and MtrH.

Its subcellular location is the cell membrane. It carries out the reaction 5-methyl-5,6,7,8-tetrahydromethanopterin + coenzyme M + 2 Na(+)(in) = 5,6,7,8-tetrahydromethanopterin + methyl-coenzyme M + 2 Na(+)(out). It functions in the pathway one-carbon metabolism; methanogenesis from CO(2); methyl-coenzyme M from 5,10-methylene-5,6,7,8-tetrahydromethanopterin: step 2/2. Part of a complex that catalyzes the formation of methyl-coenzyme M and tetrahydromethanopterin from coenzyme M and methyl-tetrahydromethanopterin. This is an energy-conserving, sodium-ion translocating step. The sequence is that of Tetrahydromethanopterin S-methyltransferase subunit E from Methanococcus vannielii (strain ATCC 35089 / DSM 1224 / JCM 13029 / OCM 148 / SB).